Reading from the N-terminus, the 384-residue chain is Involucrin (384 aa).

Residues 1-384 (MSQQHTLPVT…LPEQPQEPEV (384 aa)) are disordered. 2 stretches are compositionally biased toward basic and acidic residues: residues 56–65 (PSKHEEKGTD) and 80–134 (PELH…ELHL). The segment covering 137 to 146 (QQQQESQEQE) has biased composition (low complexity). The span at 179 to 208 (KQREPQESQEQRLHLGKEQESQEQRLHLGE) shows a compositional bias: basic and acidic residues. The segment covering 239–267 (PEQRLQLLPQGPQEQELHLGKQQQQQESQ) has biased composition (low complexity). Composition is skewed to basic and acidic residues over residues 268 to 308 (QHQE…KKLL) and 315 to 336 (EAVKRHEQLQRDEQFGMKKEQL).

The protein belongs to the involucrin family. In terms of assembly, directly or indirectly cross-linked to cornifelin (CNFN). Post-translationally, substrate of transglutaminase. Specific glutamines or lysines are cross-linked to keratins, desmoplakin and to inter involucrin molecules. As to expression, keratinocytes of epidermis and other stratified squamous epithelia.

The protein resides in the cytoplasm. Functionally, part of the insoluble cornified cell envelope (CE) of stratified squamous epithelia. In Otolemur crassicaudatus (Brown greater galago), this protein is Involucrin (IVL).